Here is a 275-residue protein sequence, read N- to C-terminus: Polyamine aminopropyltransferase (275 aa).

One can recognise a PABS domain in the interval 2-235 (EFWFTEKQTE…GMWTFTIGSK (234 aa)). Gln-31 contacts S-methyl-5'-thioadenosine. His-62 and Asp-86 together coordinate spermidine. Residues Asp-106 and 137–138 (DG) contribute to the S-methyl-5'-thioadenosine site. Asp-155 acts as the Proton acceptor in catalysis. 155 to 158 (DSTE) contributes to the spermidine binding site. Pro-162 is an S-methyl-5'-thioadenosine binding site.

Belongs to the spermidine/spermine synthase family. In terms of assembly, homodimer or homotetramer.

It is found in the cytoplasm. It carries out the reaction S-adenosyl 3-(methylsulfanyl)propylamine + putrescine = S-methyl-5'-thioadenosine + spermidine + H(+). Its pathway is amine and polyamine biosynthesis; spermidine biosynthesis; spermidine from putrescine: step 1/1. Its function is as follows. Catalyzes the irreversible transfer of a propylamine group from the amino donor S-adenosylmethioninamine (decarboxy-AdoMet) to putrescine (1,4-diaminobutane) to yield spermidine. The chain is Polyamine aminopropyltransferase from Shouchella clausii (strain KSM-K16) (Alkalihalobacillus clausii).